The following is a 265-amino-acid chain: Tryptophan synthase alpha chain (265 aa).

Residues E47 and D58 each act as proton acceptor in the active site.

It belongs to the TrpA family. Tetramer of two alpha and two beta chains.

It catalyses the reaction (1S,2R)-1-C-(indol-3-yl)glycerol 3-phosphate + L-serine = D-glyceraldehyde 3-phosphate + L-tryptophan + H2O. Its pathway is amino-acid biosynthesis; L-tryptophan biosynthesis; L-tryptophan from chorismate: step 5/5. Its function is as follows. The alpha subunit is responsible for the aldol cleavage of indoleglycerol phosphate to indole and glyceraldehyde 3-phosphate. The protein is Tryptophan synthase alpha chain of Methanoregula boonei (strain DSM 21154 / JCM 14090 / 6A8).